We begin with the raw amino-acid sequence, 158 residues long: 6,7-dimethyl-8-ribityllumazine synthase (158 aa).

5-amino-6-(D-ribitylamino)uracil-binding positions include Phe23, 61-63 (SFE), and 85-87 (AVI). Position 90–91 (90–91 (ET)) interacts with (2S)-2-hydroxy-3-oxobutyl phosphate. His93 acts as the Proton donor in catalysis. Phe118 is a 5-amino-6-(D-ribitylamino)uracil binding site. Position 132 (Arg132) interacts with (2S)-2-hydroxy-3-oxobutyl phosphate.

This sequence belongs to the DMRL synthase family.

The catalysed reaction is (2S)-2-hydroxy-3-oxobutyl phosphate + 5-amino-6-(D-ribitylamino)uracil = 6,7-dimethyl-8-(1-D-ribityl)lumazine + phosphate + 2 H2O + H(+). It participates in cofactor biosynthesis; riboflavin biosynthesis; riboflavin from 2-hydroxy-3-oxobutyl phosphate and 5-amino-6-(D-ribitylamino)uracil: step 1/2. Its function is as follows. Catalyzes the formation of 6,7-dimethyl-8-ribityllumazine by condensation of 5-amino-6-(D-ribitylamino)uracil with 3,4-dihydroxy-2-butanone 4-phosphate. This is the penultimate step in the biosynthesis of riboflavin. This Prochlorococcus marinus (strain MIT 9312) protein is 6,7-dimethyl-8-ribityllumazine synthase.